A 1013-amino-acid polypeptide reads, in one-letter code: MALPLLLLLLLLLPPRVLPAAPSSVPHGRQLPGRLGCLLEEGLCGASEACVNDGVFGRCQKVPAMDFYRYEVSPVALQRLRVALQKLSGTGFTWQDDYTQYVMDQELADLPKTYLRHPEASGPARPSKHSIGSERRYSQEGGAALAKAFRRHLPFLEALSQAPASDALARTRMAQDRPRAEGDDRFSKSILTYVAHTSVLTYPPGPQAQLPEDLLPRTLSQLQPDELSPKVDSSVERHHLMAALSAYAAQRPPAPPGKGSLEPQYLLRAPSRMPRPLLSPAVPQKWPSPLGDPEDPPSTGEGARIHTLLKDLQRQPAEARGLSDLELDSMAELMAGLMQGMDHRGALGGPGKAALGESGEQADGPKAALRGESFPDDGVQDDDDRLYQEVHRLSATLGGLLQDHGSRLSPGALPFAKPLKMERKKSERPEASLSSEEETAGVENVKSQTYSKDLLGQQPHSEPGAGAFGELQNQMPGPSEEEQSLPAGAQEALGDGLQLEVKPSEEEARGYIVTDRDPLRPEEGRQLVEDVARLLQMPSSTFADVEVLGPAVTFKVGANVQNVTTADVEKATVDNKDKLEETSGLKILQTGVGSKSKLKFLPPQAEQEDSTKFIALTLVSLACILGVLLASGLIYCLRHSSQHRLKEKLSGLGRDPGADATAAYQELCRQRMATRPPDRPEGPHTSRISSVSSQFSDGPMPSPSARSSASSWSEEPVQSNMDISTGHMILSYMEDHLKNKNRLEKEWEALCAYQAEPNSSLVAQKEENVPKNRSLAVLTYDHSRVLLKAENSHSHSDYINASPIMDHDPRNPAYIATQGPLPATVADFWQMVWESGCVVIVMLTPLTENGVRQCYHYWPDEGSNLYHIYEVNLVSEHIWCEDFLVRSFYLKNLQTNETRTVTQFHFLSWYDRGVPSSSRSLLDFRRKVNKCYRGRSCPIIVHCSDGAGRSGTYVLIDMVLNKMAKGAKEIDIAATLEHLRDQRPGMVQTKEQFEFALTAVAEEVNAILKALPQ.

Positions 1–19 (MALPLLLLLLLLLPPRVLP) are cleaved as a signal peptide. Residues 1 to 419 (MALPLLLLLL…PGALPFAKPL (419 aa)) are involved in localization to secretory granules; interaction with CPE. Over 20 to 613 (AAPSSVPHGR…QAEQEDSTKF (594 aa)) the chain is Extracellular. Disordered stretches follow at residues 116-137 (RHPE…ERRY), 273-302 (MPRP…TGEG), 342-382 (DHRG…VQDD), and 401-487 (LQDH…SLPA). Over residues 419 to 430 (LKMERKKSERPE) the composition is skewed to basic and acidic residues. Phosphoserine is present on residues Ser-434 and Ser-435. Residue Asn-562 is glycosylated (N-linked (GlcNAc...) asparagine). A helical transmembrane segment spans residues 614-634 (IALTLVSLACILGVLLASGLI). The Cytoplasmic segment spans residues 635-1013 (YCLRHSSQHR…VNAILKALPQ (379 aa)). Positions 664 to 673 (YQELCRQRMA) match the Tyrosine-based internalization motif motif. Residues 673–717 (ATRPPDRPEGPHTSRISSVSSQFSDGPMPSPSARSSASSWSEEPV) form a disordered region. Over residues 686 to 696 (SRISSVSSQFS) the composition is skewed to polar residues. Phosphoserine is present on residues Ser-690 and Ser-696. The segment covering 703–717 (PSARSSASSWSEEPV) has biased composition (low complexity). A Tyrosine-protein phosphatase domain is found at 743 to 1003 (LEKEWEALCA…EFALTAVAEE (261 aa)). Substrate-binding positions include Asp-911 and 943 to 949 (CSDGAGR). Cys-943 acts as the Phosphocysteine intermediate in catalysis. Lys-968 is subject to N6-acetyllysine. Substrate is bound at residue Gln-988. Residues 1002–1008 (EEVNAIL) carry the Leucine-based sorting signal motif.

This sequence belongs to the protein-tyrosine phosphatase family. Receptor class 8 subfamily. Self-associates. Interacts (via cytoplasmic domain) with PTPRN (via cytoplasmic domain). Interacts (precursor form) with CPE. Interacts with HAP1. Interacts with AP2A1 or AP2A2 and AP1G1; indicative for an association with adaptor protein complex 2 (AP-2) and adaptor protein complex 1 (AP-1). Interacts with AP2M1; indicative for an association with adaptor protein complex 2 (AP-2). Interacts with MYO5A. Post-translationally, subject to proteolytic cleavage at multiple sites. As to expression, detected in pancreatic islets and adrenal medulla.

It is found in the cytoplasmic vesicle. The protein resides in the secretory vesicle membrane. It localises to the secretory vesicle. The protein localises to the synaptic vesicle membrane. It catalyses the reaction O-phospho-L-tyrosyl-[protein] + H2O = L-tyrosyl-[protein] + phosphate. In terms of biological role, plays a role in vesicle-mediated secretory processes. Required for normal accumulation of secretory vesicles in hippocampus, pituitary and pancreatic islets. Required for the accumulation of normal levels of insulin-containing vesicles and preventing their degradation. Plays a role in insulin secretion in response to glucose stimuli. Required for normal accumulation of the neurotransmitters norepinephrine, dopamine and serotonin in the brain. In females, but not in males, required for normal accumulation and secretion of pituitary hormones, such as luteinizing hormone (LH) and follicle-stimulating hormone (FSH). Required to maintain normal levels of renin expression and renin release. May regulate catalytic active protein-tyrosine phosphatases such as PTPRA through dimerization. Has phosphatidylinositol phosphatase activity; the PIPase activity is involved in its ability to regulate insulin secretion. Can dephosphorylate phosphatidylinositol 4,5-biphosphate, phosphatidylinositol 5-phosphate and phosphatidylinositol 3-phosphate. Regulates PI(4,5)P2 level in the plasma membrane and localization of cofilin at the plasma membrane and thus is indirectly involved in regulation of actin dynamics related to cell migration and metastasis; upon hydrolysis of PI(4,5)P2 cofilin is released from the plasma membrane and acts in the cytoplasm in severing F-actin filaments. The polypeptide is Receptor-type tyrosine-protein phosphatase N2 (PTPRN2) (Macaca nemestrina (Pig-tailed macaque)).